The following is a 982-amino-acid chain: Probable beta-galactosidase C (982 aa).

The first 21 residues, 1–21, serve as a signal peptide directing secretion; the sequence is MRLFALLPVLLGLISSHFVSA. Positions 80, 125, 126, 127, and 185 each coordinate substrate. The active-site Proton donor is the Glu186. A substrate-binding site is contributed by Tyr249. Residues Cys255 and Cys302 are joined by a disulfide bond. N-linked (GlcNAc...) asparagine glycosylation is present at Asn274. The active-site Nucleophile is Glu285. Tyr351 contacts substrate. 6 N-linked (GlcNAc...) asparagine glycosylation sites follow: Asn389, Asn434, Asn600, Asn675, Asn718, and Asn785.

Belongs to the glycosyl hydrolase 35 family.

The protein resides in the secreted. It catalyses the reaction Hydrolysis of terminal non-reducing beta-D-galactose residues in beta-D-galactosides.. Functionally, cleaves beta-linked terminal galactosyl residues from gangliosides, glycoproteins, and glycosaminoglycans. The chain is Probable beta-galactosidase C (lacC) from Penicillium rubens (strain ATCC 28089 / DSM 1075 / NRRL 1951 / Wisconsin 54-1255) (Penicillium chrysogenum).